Here is a 589-residue protein sequence, read N- to C-terminus: Phenylalanine--tRNA ligase beta subunit (589 aa).

Residues 302 to 377 (LEVREERISV…IAYGYNNIKK (76 aa)) form the B5 domain. Positions 355, 361, 364, and 365 each coordinate Mg(2+).

The protein belongs to the phenylalanyl-tRNA synthetase beta subunit family. Type 2 subfamily. As to quaternary structure, tetramer of two alpha and two beta subunits. Requires Mg(2+) as cofactor.

It localises to the cytoplasm. It catalyses the reaction tRNA(Phe) + L-phenylalanine + ATP = L-phenylalanyl-tRNA(Phe) + AMP + diphosphate + H(+). In Drosophila melanogaster (Fruit fly), this protein is Phenylalanine--tRNA ligase beta subunit.